An 882-amino-acid chain; its full sequence is Bifunctional heparan sulfate N-deacetylase/N-sulfotransferase 1 (882 aa).

At 1–17 (MPALACLRRLCRHVSPQ) the chain is on the cytoplasmic side. Residues 1 to 169 (MPALACLRRL…VAYGVGIIGF (169 aa)) form a sufficient for localization to Golgi membrane region. A helical; Signal-anchor for type II membrane protein membrane pass occupies residues 18–39 (AVLFLLFIFCLFSVFISAYYLY). The tract at residues 40–598 (GWKRGLEPSA…KRHKDIWSKE (559 aa)) is heparan sulfate N-deacetylase 1. Over 40–882 (GWKRGLEPSA…WLREDLQNTR (843 aa)) the chain is Lumenal. Asn231, Asn351, and Asn401 each carry an N-linked (GlcNAc...) asparagine glycan. The heparan sulfate N-sulfotransferase 1 stretch occupies residues 599–882 (KTCDRFPKLL…WLREDLQNTR (284 aa)). Lys614 acts as the For sulfotransferase activity in catalysis. 614–618 (KTGTT) is a binding site for adenosine 3',5'-bisphosphate. The N-linked (GlcNAc...) asparagine glycan is linked to Asn667. Ser712 and Trp817 together coordinate adenosine 3',5'-bisphosphate. An intrachain disulfide couples Cys818 to Cys828. An adenosine 3',5'-bisphosphate-binding site is contributed by 833-837 (KGRKY).

This sequence belongs to the sulfotransferase 1 family. NDST subfamily. As to quaternary structure, monomer. Interacts with heparan sulfate co-polymerase subunits EXT1 and EXT2. Interacts with NDST1 isoform 3. In terms of assembly, interacts with heparan sulfate co-polymerase subunits EXT1 and EXT2. Interacts with NDST1 isoform 1. Widely expressed. Expression is most abundant in heart, liver and pancreas.

The protein resides in the golgi apparatus. Its subcellular location is the trans-Golgi network membrane. The protein localises to the cis-Golgi network membrane. The enzyme catalyses N-acetyl-alpha-D-glucosaminyl-[heparan sulfate](n) + H2O = alpha-D-glucosaminyl-[heparan sulfate](n) + acetate. The catalysed reaction is alpha-D-glucosaminyl-[heparan sulfate](n) + 3'-phosphoadenylyl sulfate = N-sulfo-alpha-D-glucosaminyl-[heparan sulfate](n) + adenosine 3',5'-bisphosphate + 2 H(+). It functions in the pathway glycan metabolism; heparan sulfate biosynthesis. The protein operates within glycan metabolism; heparin biosynthesis. Its function is as follows. Essential bifunctional enzyme that catalyzes both the N-deacetylation and the N-sulfation of glucosamine (GlcNAc) of the glycosaminoglycan in heparan sulfate. Modifies the GlcNAc-GlcA disaccharide repeating sugar backbone to make N-sulfated heparosan, a prerequisite substrate for later modifications in heparin biosynthesis. Plays a role in determining the extent and pattern of sulfation of heparan sulfate. Participates in biosynthesis of heparan sulfate that can ultimately serve as L-selectin ligands, thereby playing a role in inflammatory response. Required for the exosomal release of SDCBP, CD63 and syndecan. In terms of biological role, lacks both N-deacetylase and N-sulfotransferase activities. Acts as a dominant negative on isoform 1, likely by changing the composition of enzyme complexes responsible for elongation and modification of heparan sulfates. This Homo sapiens (Human) protein is Bifunctional heparan sulfate N-deacetylase/N-sulfotransferase 1.